Consider the following 604-residue polypeptide: M-phase inducer phosphatase cdc-25.1 (604 aa).

2 disordered regions span residues 33-67 (PKTLFEEDGSSRDSGVSMTSCSDKSDASPEEDVDF) and 127-188 (EKRV…PFGD). Over residues 44-54 (RDSGVSMTSCS) the composition is skewed to polar residues. Over residues 127 to 138 (EKRVMSERPTDN) the composition is skewed to basic and acidic residues. The Rhodanese domain maps to 305–413 (FDKKYIIVDC…LWSTAECRQI (109 aa)). 2 disordered regions span residues 443 to 464 (ASLKPNGETSHREEKKKRCTRS) and 562 to 588 (DFPDRPSESSSTTPAGEHLPLGEGGHQ).

The protein belongs to the MPI phosphatase family.

The enzyme catalyses O-phospho-L-tyrosyl-[protein] + H2O = L-tyrosyl-[protein] + phosphate. This Caenorhabditis elegans protein is M-phase inducer phosphatase cdc-25.1 (cdc-25.1).